We begin with the raw amino-acid sequence, 256 residues long: Small ribosomal subunit protein eS1 (256 aa).

The span at 1–18 (MAVGKNKRLSKGKKGLKK) shows a compositional bias: basic residues. The disordered stretch occupies residues 1–20 (MAVGKNKRLSKGKKGLKKRT). N-acetylalanine; partial is present on Ala-2.

This sequence belongs to the eukaryotic ribosomal protein eS1 family. Component of the small ribosomal subunit. Mature ribosomes consist of a small (40S) and a large (60S) subunit. The 40S subunit contains about 33 different proteins and 1 molecule of RNA (18S). The 60S subunit contains about 49 different proteins and 3 molecules of RNA (25S, 5.8S and 5S).

The protein resides in the cytoplasm. The protein is Small ribosomal subunit protein eS1 (rps1) of Talaromyces marneffei (strain ATCC 18224 / CBS 334.59 / QM 7333) (Penicillium marneffei).